The chain runs to 325 residues: Proto-oncogene Mas (325 aa).

The Extracellular portion of the chain corresponds to 1-36; it reads MDGSNVTSFVVEEPTNISTGRNASVGNAHRQIPIVH. N-linked (GlcNAc...) asparagine glycosylation is found at Asn-5, Asn-16, and Asn-22. Residues 37-61 form a helical membrane-spanning segment; sequence WVIMSISPVGFVENGILLWFLCFRM. Residues 62–65 are Cytoplasmic-facing; the sequence is RRNP. The helical transmembrane segment at 66 to 86 threads the bilayer; that stretch reads FTVYITHLSIADISLLFCIFI. Residues 87–104 are Extracellular-facing; that stretch reads LSIDYALDYELSSGHYYT. A helical membrane pass occupies residues 105 to 128; that stretch reads IVTLSVTFLFGYNTGLYLLTAISV. Topologically, residues 129-149 are cytoplasmic; sequence ERCLSVLYPIWYRCHRPKYQS. Residues 150-172 traverse the membrane as a helical segment; the sequence is ALVCALLWALSCLVTTMEYVMCI. Residues 173–185 are Extracellular-facing; the sequence is DREEESHSRNDCR. A helical transmembrane segment spans residues 186-206; sequence AVIIFIAILSFLVFTPLMLVS. At 207 to 224 the chain is on the cytoplasmic side; that stretch reads STILVVKIRKNTWASHSS. Residues 225-245 traverse the membrane as a helical segment; it reads KLYIVIMVTIIIFLIFAMPMR. Residues 246–263 are Extracellular-facing; that stretch reads LLYLLYYEYWSTFGNLHH. Residues 264-284 form a helical membrane-spanning segment; sequence ISLLFSTINSSANPFIYFFVG. Residues 285 to 325 lie on the Cytoplasmic side of the membrane; sequence SSKKKRFKESLKVVLTRAFKDEMQPRRQKDNCNTVTVETVV.

This sequence belongs to the G-protein coupled receptor 1 family. Interacts with AGTR1. Interacts with FLNA (via filamin repeat 21); increases PKA-mediated phosphorylation of FLNA.

Its subcellular location is the cell membrane. Receptor for angiotensin 1-7. Acts specifically as a functional antagonist of AGTR1 (angiotensin-2 type 1 receptor), although it up-regulates AGTR1 receptor levels. Positive regulation of AGTR1 levels occurs through activation of the G-proteins GNA11 and GNAQ, and stimulation of the protein kinase C signaling cascade. The antagonist effect on AGTR1 function is probably due to AGTR1 being physically altered by MAS1. The sequence is that of Proto-oncogene Mas (MAS1) from Homo sapiens (Human).